A 227-amino-acid polypeptide reads, in one-letter code: Uracil-DNA glycosylase (227 aa).

D68 serves as the catalytic Proton acceptor.

It belongs to the uracil-DNA glycosylase (UDG) superfamily. UNG family.

The protein localises to the cytoplasm. It catalyses the reaction Hydrolyzes single-stranded DNA or mismatched double-stranded DNA and polynucleotides, releasing free uracil.. Its function is as follows. Excises uracil residues from the DNA which can arise as a result of misincorporation of dUMP residues by DNA polymerase or due to deamination of cytosine. The protein is Uracil-DNA glycosylase of Mycolicibacterium paratuberculosis (strain ATCC BAA-968 / K-10) (Mycobacterium paratuberculosis).